Consider the following 272-residue polypeptide: Putative hydro-lyase RPD_1846 (272 aa).

It belongs to the D-glutamate cyclase family.

The protein is Putative hydro-lyase RPD_1846 of Rhodopseudomonas palustris (strain BisB5).